Reading from the N-terminus, the 489-residue chain is 5'-AMP-activated protein kinase subunit gamma-3 (489 aa).

The segment at 1 to 113 (MEPGLEHALR…PAGVGTPPTG (113 aa)) is disordered. Positions 34 to 46 (SSSWPSPAVTSSS) are enriched in low complexity. The span at 50–62 (RGKRRAKALRWTR) shows a compositional bias: basic residues. CBS domains lie at 197 to 258 (MATS…RSPL), 280 to 340 (CFKP…LLPR), and 355 to 415 (TFRD…HLDM). ADP contacts are provided by residues arginine 225, 240–245 (MLTITD), valine 285, 306–307 (HR), and lysine 325. AMP-binding positions include arginine 225, 240–245 (MLTITD), valine 285, histidine 306, 306–307 (HR), lysine 325, threonine 355, alanine 360, 381–382 (SA), 397–400 (SRFD), arginine 424, leucine 432, histidine 453, 453–454 (HR), and 469–472 (SLSD). ATP contacts are provided by residues arginine 225, 240–245 (MLTITD), valine 285, 306–307 (HR), arginine 307, and lysine 325. Residues 293-314 (LFEAVYTLIKNRIHRLPVLDPV) carry the AMPK pseudosubstrate motif. Residues 397-400 (SRFD), arginine 424, leucine 432, and 453-454 (HR) each bind ADP. ATP is bound by residues 397–400 (SRFD), arginine 424, leucine 432, and 453–454 (HR). The CBS 4 domain maps to 427–486 (CLEGVLSCQPHESLGEVIDRIAREQVHRLVLVDETQHLLGVVSLSDILQALVLSPAGIDA).

This sequence belongs to the 5'-AMP-activated protein kinase gamma subunit family. AMPK is a heterotrimer of an alpha catalytic subunit (PRKAA1 or PRKAA2), a beta (PRKAB1 or PRKAB2) and a gamma non-catalytic subunits (PRKAG1, PRKAG2 or PRKAG3). Interacts with FNIP1 and FNIP2. Phosphorylated by ULK1; leading to negatively regulate AMPK activity and suggesting the existence of a regulatory feedback loop between ULK1 and AMPK. Post-translationally, glycosylated; O-GlcNAcylated by OGT, promoting the AMP-activated protein kinase (AMPK) activity. Skeletal muscle, with weak expression in heart and pancreas.

AMP/ATP-binding subunit of AMP-activated protein kinase (AMPK), an energy sensor protein kinase that plays a key role in regulating cellular energy metabolism. In response to reduction of intracellular ATP levels, AMPK activates energy-producing pathways and inhibits energy-consuming processes: inhibits protein, carbohydrate and lipid biosynthesis, as well as cell growth and proliferation. AMPK acts via direct phosphorylation of metabolic enzymes, and by longer-term effects via phosphorylation of transcription regulators. AMPK also acts as a regulator of cellular polarity by remodeling the actin cytoskeleton; probably by indirectly activating myosin. The AMPK gamma3 subunit is a non-catalytic subunit with a regulatory role in muscle energy metabolism. It mediates binding to AMP, ADP and ATP, leading to AMPK activation or inhibition: AMP-binding results in allosteric activation of alpha catalytic subunit (PRKAA1 or PRKAA2) both by inducing phosphorylation and preventing dephosphorylation of catalytic subunits. ADP also stimulates phosphorylation, without stimulating already phosphorylated catalytic subunit. ATP promotes dephosphorylation of catalytic subunit, rendering the AMPK enzyme inactive. The protein is 5'-AMP-activated protein kinase subunit gamma-3 (PRKAG3) of Homo sapiens (Human).